Here is a 507-residue protein sequence, read N- to C-terminus: MDPKLGRMAASLLAVLLLLLERGMFSSPSPPPALLEKVFQYIDLHQDEFVQTLKEWVAIESDSVQPVPRFRQELFRMMAVAADTLQRLGARVASVDMGPQQLPDGQSLPIPPVILAELGSDPTKGTVCFYGHLDVQPADRGDGWLTDPYVLTEVDGKLYGRGATDNKGPVLAWINAVSAFRALEQDLPVNIKFIIEGMEEAGSVALEELVEKEKDRFFSGVDYIVISDNLWISQRKPAITYGTRGNSYFMVEVKCRDQDFHSGTFGGILHEPMADLVALLGSLVDSSGHILVPGIYDEVVPLTEEEINTYKAIHLDLEEYRNSSRVEKFLFDTKEEILMHLWRYPSLSIHGIEGAFDEPGTKTVIPGRVIGKFSIRLVPHMNVSAVEKQVTRHLEDVFSKRNSSNKMVVSMTLGLHPWIANIDDTQYLAAKRAIRTVFGTEPDMIRDGSTIPIAKMFQEIVHKSVVLIPLGAVDDGEHSQNEKINRWNYIEGTKLFAAFFLEMAQLH.

The N-terminal stretch at 1 to 26 (MDPKLGRMAASLLAVLLLLLERGMFS) is a signal peptide. Zn(2+) is bound at residue histidine 132. Residue aspartate 134 is part of the active site. Zn(2+) is bound at residue aspartate 165. The Proton acceptor role is filled by glutamate 199. Glutamate 200 serves as a coordination point for Zn(2+). Residue serine 219 is modified to Phosphoserine. Aspartate 228 contributes to the Zn(2+) binding site. Asparagine 322 and asparagine 382 each carry an N-linked (GlcNAc...) asparagine glycan. A Zn(2+)-binding site is contributed by histidine 478.

The protein belongs to the peptidase M20A family. Homodimer. The cofactor is Zn(2+). As to expression, found in serum and adult nervous central system. Absent in serum from patients with homocarnosinosis.

It localises to the secreted. It catalyses the reaction Preferential hydrolysis of the beta-Ala-|-His dipeptide (carnosine), and also anserine, Xaa-|-His dipeptides and other dipeptides including homocarnosine.. The catalysed reaction is carnosine + H2O = beta-alanine + L-histidine. It carries out the reaction anserine + H2O = N(pros)-methyl-L-histidine + beta-alanine. The enzyme catalyses L-alanyl-L-histidine + H2O = L-histidine + L-alanine. It catalyses the reaction glycyl-L-histidine + H2O = L-histidine + glycine. The catalysed reaction is L-homocarnosine + H2O = 4-aminobutanoate + L-histidine. With respect to regulation, activated by cadmium ions. Inhibited by the metal chelator 1,10-o-phenantrolin. The inhibitory concentration 50% (IC(50)) is 5 uM. Functionally, catalyzes the peptide bond hydrolysis in Xaa-His dipeptides, displaying the highest activity toward carnosine (beta-alanyl-L-histidine) and anserine (beta-alanyl-3-methyl-histidine). The chain is Beta-Ala-His dipeptidase from Homo sapiens (Human).